The sequence spans 420 residues: Tyrosine--tRNA ligase (420 aa).

Y38 contacts L-tyrosine. Residues 43–52 (PTGDSLHIGH) carry the 'HIGH' region motif. L-tyrosine contacts are provided by Y169 and Q173. Residues 231–235 (KFGKS) carry the 'KMSKS' region motif. Residue K234 coordinates ATP. The 67-residue stretch at 353–419 (KNIVDFLVDT…GKRKYTLVTI (67 aa)) folds into the S4 RNA-binding domain.

The protein belongs to the class-I aminoacyl-tRNA synthetase family. TyrS type 1 subfamily. In terms of assembly, homodimer.

It is found in the cytoplasm. It carries out the reaction tRNA(Tyr) + L-tyrosine + ATP = L-tyrosyl-tRNA(Tyr) + AMP + diphosphate + H(+). Its function is as follows. Catalyzes the attachment of tyrosine to tRNA(Tyr) in a two-step reaction: tyrosine is first activated by ATP to form Tyr-AMP and then transferred to the acceptor end of tRNA(Tyr). This Lactobacillus acidophilus (strain ATCC 700396 / NCK56 / N2 / NCFM) protein is Tyrosine--tRNA ligase.